A 98-amino-acid chain; its full sequence is NADH-ubiquinone oxidoreductase chain 4L (98 aa).

The next 3 helical transmembrane spans lie at 1-21 (MSMV…GMLV), 29-49 (SLLC…VTIL), and 61-81 (IVLL…LVMV).

It belongs to the complex I subunit 4L family. In terms of assembly, core subunit of respiratory chain NADH dehydrogenase (Complex I) which is composed of 45 different subunits.

Its subcellular location is the mitochondrion inner membrane. It catalyses the reaction a ubiquinone + NADH + 5 H(+)(in) = a ubiquinol + NAD(+) + 4 H(+)(out). In terms of biological role, core subunit of the mitochondrial membrane respiratory chain NADH dehydrogenase (Complex I) which catalyzes electron transfer from NADH through the respiratory chain, using ubiquinone as an electron acceptor. Part of the enzyme membrane arm which is embedded in the lipid bilayer and involved in proton translocation. This is NADH-ubiquinone oxidoreductase chain 4L (MT-ND4L) from Vulpes vulpes (Red fox).